The sequence spans 260 residues: Cytosolic Fe-S cluster assembly factor Nubp2 homolog (260 aa).

14–21 (GKGGVGKS) is a binding site for ATP. C188 and C191 together coordinate [4Fe-4S] cluster.

The protein belongs to the Mrp/NBP35 ATP-binding proteins family. NUBP2/CFD1 subfamily. In terms of assembly, heterotetramer of 2 Nubp1 and 2 Nubp2 chains. [4Fe-4S] cluster serves as cofactor.

The protein localises to the cytoplasm. Its function is as follows. Component of the cytosolic iron-sulfur (Fe/S) protein assembly (CIA) machinery. Required for maturation of extramitochondrial Fe-S proteins. The Nubp1-Nubp2 heterotetramer forms a Fe-S scaffold complex, mediating the de novo assembly of an Fe-S cluster and its transfer to target apoproteins. The protein is Cytosolic Fe-S cluster assembly factor Nubp2 homolog of Drosophila melanogaster (Fruit fly).